We begin with the raw amino-acid sequence, 206 residues long: Small ribosomal subunit protein uS4 (206 aa).

Residues 96 to 156 (CRLDNVVYRM…EKAKNQLRIV (61 aa)) enclose the S4 RNA-binding domain.

This sequence belongs to the universal ribosomal protein uS4 family. Part of the 30S ribosomal subunit. Contacts protein S5. The interaction surface between S4 and S5 is involved in control of translational fidelity.

In terms of biological role, one of the primary rRNA binding proteins, it binds directly to 16S rRNA where it nucleates assembly of the body of the 30S subunit. With S5 and S12 plays an important role in translational accuracy. The chain is Small ribosomal subunit protein uS4 from Pseudomonas fluorescens (strain ATCC BAA-477 / NRRL B-23932 / Pf-5).